A 149-amino-acid polypeptide reads, in one-letter code: SsrA-binding protein (149 aa).

A disordered region spans residues 121-149 (GKGEHDKRDTIKDREGKREVERAMKSRSR).

It belongs to the SmpB family.

The protein resides in the cytoplasm. In terms of biological role, required for rescue of stalled ribosomes mediated by trans-translation. Binds to transfer-messenger RNA (tmRNA), required for stable association of tmRNA with ribosomes. tmRNA and SmpB together mimic tRNA shape, replacing the anticodon stem-loop with SmpB. tmRNA is encoded by the ssrA gene; the 2 termini fold to resemble tRNA(Ala) and it encodes a 'tag peptide', a short internal open reading frame. During trans-translation Ala-aminoacylated tmRNA acts like a tRNA, entering the A-site of stalled ribosomes, displacing the stalled mRNA. The ribosome then switches to translate the ORF on the tmRNA; the nascent peptide is terminated with the 'tag peptide' encoded by the tmRNA and targeted for degradation. The ribosome is freed to recommence translation, which seems to be the essential function of trans-translation. In Polaromonas sp. (strain JS666 / ATCC BAA-500), this protein is SsrA-binding protein.